Reading from the N-terminus, the 295-residue chain is Small ribosomal subunit protein uS2 (295 aa).

Position 2 is an N-acetylserine (S2). S43 is modified (phosphoserine). An N6-acetyllysine modification is found at K52. An interaction with PPP1R16B region spans residues 54–113 (TWEKLLLAARAIVAIENPADVSVISSRNTGQRAVLKFAAATGATPIAGRFTPGTFTNQIQ). K89 bears the N6-acetyllysine; alternate mark. K89 is covalently cross-linked (Glycyl lysine isopeptide (Lys-Gly) (interchain with G-Cter in SUMO2); alternate). Position 97 is a phosphothreonine (T97). Laminin-binding stretches follow at residues 161–180 (IPCN…MLAR) and 205–229 (RDPE…EFQG). [DE]-W-[ST] repeat units lie at residues 230-232 (EWT), 247-249 (DWS), 266-268 (DWS), 275-277 (DWS), and 293-295 (EWS). The tract at residues 242–295 (QPEVADWSEGVQVPSVPIQQFPTEDWSAQPTTEDWSAAPTAQATEWVGTTTEWS) is laminin-binding. Residues 266–295 (DWSAQPTTEDWSAAPTAQATEWVGTTTEWS) form a disordered region.

This sequence belongs to the universal ribosomal protein uS2 family. In terms of assembly, monomer (37LRP) and homodimer (67LR). Component of the small ribosomal subunit. Mature ribosomes consist of a small (40S) and a large (60S) subunit. The 40S subunit contains about 33 different proteins and 1 molecule of RNA (18S). The 60S subunit contains about 49 different proteins and 3 molecules of RNA (28S, 5.8S and 5S). Interacts with RPS21. Interacts with several laminins including at least LAMB1. Interacts with MDK. The mature dimeric form interacts with PPP1R16B (via its fourth ankyrin repeat). Interacts with PPP1CA only in the presence of PPP1R16B. Post-translationally, acylated. Acylation may be a prerequisite for conversion of the monomeric 37 kDa laminin receptor precursor (37LRP) to the mature dimeric 67 kDa laminin receptor (67LR), and may provide a mechanism for membrane association. In terms of processing, cleaved by stromelysin-3 (ST3) at the cell surface. Cleavage by stromelysin-3 may be a mechanism to alter cell-extracellular matrix interactions.

It is found in the cell membrane. Its subcellular location is the cytoplasm. It localises to the nucleus. In terms of biological role, required for the assembly and/or stability of the 40S ribosomal subunit. Required for the processing of the 20S rRNA-precursor to mature 18S rRNA in a late step of the maturation of 40S ribosomal subunits. Also functions as a cell surface receptor for laminin. Plays a role in cell adhesion to the basement membrane and in the consequent activation of signaling transduction pathways. May play a role in cell fate determination and tissue morphogenesis. Also acts as a receptor for several other ligands, including the pathogenic prion protein, viruses, and bacteria. Acts as a PPP1R16B-dependent substrate of PPP1CA. This is Small ribosomal subunit protein uS2 from Sus scrofa (Pig).